Here is an 83-residue protein sequence, read N- to C-terminus: Parvalbumin beta 3 (83 aa).

EF-hand domains lie at 13–48 (KSND…FSAG) and 52–83 (LTAG…LVKA). Residues Asp-26, Asp-28, Ser-30, Phe-32, Glu-34, Glu-37, Asp-65, Asp-67, Asp-69, Met-71, and Glu-76 each contribute to the Ca(2+) site.

The protein belongs to the parvalbumin family.

Functionally, in muscle, parvalbumin is thought to be involved in relaxation after contraction. It binds two calcium ions. The chain is Parvalbumin beta 3 from Macruronus novaezelandiae (Blue grenadier).